Reading from the N-terminus, the 393-residue chain is DNA/RNA-binding protein KIN17 (393 aa).

A C2H2-type zinc finger spans residues 28–50 (CQMCQKQCRDENGFKCHCMSESH). Residues 51–160 (QRQLLLASEN…RQLELEKKKK (110 aa)) form a winged helix-turn-helix (wHTH) region. An N6,N6,N6-trimethyllysine; by METTL22; in vitro modification is found at Lys135. Residue Lys135 is modified to N6-methyllysine. The stretch at 147-180 (ETIRRQLELEKKKKQDLDDEEKTAKFIEEQVRRG) forms a coiled coil. A compositionally biased stretch (low complexity) spans 209–224 (KGACSSSGATSSKSST). The tract at residues 209–260 (KGACSSSGATSSKSSTLGPSALKTIGSSASVKRKESSQSSTQSKEKKKKKSA) is disordered. The stretch at 250 to 277 (QSKEKKKKKSALDEIMEIEEEKKRTART) forms a coiled coil. A C-terminal subdomain A region spans residues 284–334 (EIIVKIITKKLGEKYHKKKAIVKEVIDKYTAVVKMIDSGDKLKLDQTHLET). A C-terminal subdomain B region spans residues 340–391 (GKRILVLNGGYRGNEGTLESINEKTFSATIVIETGPLKGRRVEGIQYEDISK).

It belongs to the KIN17 family. Associated with DNA polymerase alpha, RFC1 and cyclin A, in multiprotein DNA replication complexes. Also associates with replication origins at the G1/S phase boundary and throughout the S phase in vivo. In terms of assembly, (Microbial infection) Interacts with SV40 large T antigen. Ubiquitously expressed in all tissues examined, with highest levels in skeletal muscle, heart and testis. Differentially expressed in non-tumorigenic and tumorigenic cell lines. Highly expressed in proliferating epithelial keratinocyte cells in vitro (at protein level).

The protein resides in the nucleus. The protein localises to the cytoplasm. In terms of biological role, involved in DNA replication and the cellular response to DNA damage. May participate in DNA replication factories and create a bridge between DNA replication and repair mediated by high molecular weight complexes. May play a role in illegitimate recombination and regulation of gene expression. May participate in mRNA processing. Binds, in vitro, to double-stranded DNA. Also shown to bind preferentially to curved DNA in vitro and in vivo. Binds via its C-terminal domain to RNA in vitro. In Homo sapiens (Human), this protein is DNA/RNA-binding protein KIN17.